The following is a 440-amino-acid chain: MAGKLWTFLLLFGFSWVWPASAHRKLLVLLLDGFRSDYISEDALASLPGFREIVNRGVKVDYLTPDFPSLSYPNYYTLMTGRHCEVHQMIGNYMWDPRTNKSFDIGVNRDSLMPLWWNGSEPLWITLMKARRKVYMYYWPGCEVEILGVRPTYCLEYKNVPTDINFANAVSDALDSLKSGRADLAAIYHERIDVEGHHYGPSSPQRKDALKAVDTVLKYMTQWIQERGLQNDLNVILFSDHGMTDIFWMDKVIELSKYISLDDLQQVKDQGPVVSLWPVPEKHSEIYHKLRTVEHMTVYEKEAIPNRFYYKKGKFVSPLTLVADEGWFIAESREALPFWMNSTGKREGWQHGWHGYDNELMDMRGIFLAFGPDFKSNFRAAPIRSVDVYNIMCNVVGITPLPNNGSWSRVVCMLKSQTSSSPSIPPNSCALVLILLLYFV.

The first 22 residues, 1 to 22, serve as a signal peptide directing secretion; it reads MAGKLWTFLLLFGFSWVWPASA. The substrate site is built by D32, S71, and N92. Residues D32 and S71 each coordinate Zn(2+). S71 functions as the Nucleophile in the catalytic mechanism. S71 bears the Phosphoserine mark. Residues N100 and N118 are each glycosylated (N-linked (GlcNAc...) asparagine). The cysteines at positions 142 and 154 are disulfide-linked. D193 provides a ligand contact to substrate. The Zn(2+) site is built by D193, H197, D240, and H241. H241 lines the substrate pocket. N341 is a glycosylation site (N-linked (GlcNAc...) asparagine). H354 provides a ligand contact to substrate. H354 is a Zn(2+) binding site. N404 carries an N-linked (GlcNAc...) asparagine glycan. The GPI-anchor amidated serine moiety is linked to residue S419. Residues 420–440 constitute a propeptide, removed in mature form; that stretch reads SSPSIPPNSCALVLILLLYFV.

The protein belongs to the nucleotide pyrophosphatase/phosphodiesterase family. Homodimer; disulfide-linked. Homotetramer. Zn(2+) is required as a cofactor.

Its subcellular location is the cell membrane. It carries out the reaction sn-glycerol 3-phosphocholine + H2O = phosphocholine + glycerol + H(+). The catalysed reaction is a 1-acyl-sn-glycero-3-phosphocholine + H2O = a 1-acyl-sn-glycerol + phosphocholine + H(+). The enzyme catalyses a 1-O-alkyl-sn-glycero-3-phosphocholine + H2O = a 1-O-alkyl-sn-glycerol + phosphocholine + H(+). It catalyses the reaction 1-dodecanoyl-sn-glycero-3-phosphocholine + H2O = 1-dodecanoyl-sn-glycerol + phosphocholine + H(+). It carries out the reaction 1-hexadecanoyl-sn-glycero-3-phosphocholine + H2O = 1-hexadecanoyl-sn-glycerol + phosphocholine + H(+). The catalysed reaction is 1-(5Z,8Z,11Z,14Z-eicosatetraenoyl)-sn-glycero-3-phosphocholine + H2O = 1-(5Z,8Z,11Z,14Z-eicosatetraenoyl)-sn-glycerol + phosphocholine + H(+). The enzyme catalyses 1-tetradecanoyl-sn-glycero-3-phosphocholine + H2O = 1-tetradecanoyl-sn-glycerol + phosphocholine + H(+). It catalyses the reaction sphing-4-enine-phosphocholine + H2O = sphing-4-enine + phosphocholine + H(+). It carries out the reaction 1-(9Z-octadecenoyl)-sn-glycero-3-phosphocholine + H2O = 1-(9Z-octadecenoyl)-sn-glycerol + phosphocholine + H(+). The catalysed reaction is 1-(9Z,12Z)-octadecadienoyl-sn-glycero-3-phosphocholine + H2O = 1-(9Z,12Z-octadecadienoyl)-sn-glycerol + phosphocholine + H(+). The enzyme catalyses glycero-2-phosphocholine + H2O = phosphocholine + glycerol + H(+). Inhibited by EDTA and EGTA in vitro. Functionally, choline-specific glycerophosphodiesterase that hydrolyzes glycerophosphocholine (GPC) and lysophosphatidylcholine (LPC) and contributes to supplying choline to the cells. Has a preference for LPC with short (12:0 and 14:0) or polyunsaturated (18:2 and 20:4) fatty acids. In vitro, hydrolyzes only choline-containing lysophospholipids, such as sphingosylphosphorylcholine (SPC), platelet-activating factor (PAF) and lysoPAF, but not other lysophospholipids. This is Glycerophosphocholine cholinephosphodiesterase ENPP6 from Rattus norvegicus (Rat).